The chain runs to 465 residues: Ribulose bisphosphate carboxylase large chain (465 aa).

Position 4 is an N6,N6,N6-trimethyllysine (lysine 4). Substrate is bound by residues asparagine 113 and threonine 163. Lysine 165 (proton acceptor) is an active-site residue. A substrate-binding site is contributed by lysine 167. Positions 191, 193, and 194 each coordinate Mg(2+). Lysine 191 carries the N6-carboxylysine modification. Histidine 284 functions as the Proton acceptor in the catalytic mechanism. The substrate site is built by arginine 285, histidine 317, and serine 369.

Belongs to the RuBisCO large chain family. Type I subfamily. Heterohexadecamer of 8 large chains and 8 small chains; disulfide-linked. The disulfide link is formed within the large subunit homodimers. It depends on Mg(2+) as a cofactor. In terms of processing, the disulfide bond which can form in the large chain dimeric partners within the hexadecamer appears to be associated with oxidative stress and protein turnover.

The protein resides in the plastid. It localises to the chloroplast. The enzyme catalyses 2 (2R)-3-phosphoglycerate + 2 H(+) = D-ribulose 1,5-bisphosphate + CO2 + H2O. It carries out the reaction D-ribulose 1,5-bisphosphate + O2 = 2-phosphoglycolate + (2R)-3-phosphoglycerate + 2 H(+). RuBisCO catalyzes two reactions: the carboxylation of D-ribulose 1,5-bisphosphate, the primary event in carbon dioxide fixation, as well as the oxidative fragmentation of the pentose substrate in the photorespiration process. Both reactions occur simultaneously and in competition at the same active site. The protein is Ribulose bisphosphate carboxylase large chain of Humiria balsamifera (Tauroniro).